Here is a 469-residue protein sequence, read N- to C-terminus: Serine/threonine-protein kinase orb6 (469 aa).

Residues 93 to 392 (FSTIKVIGKG…AIEIMQHPFF (300 aa)) form the Protein kinase domain. ATP-binding positions include 99-107 (IGKGAFGEV) and lysine 122. The Proton acceptor role is filled by aspartate 216. An AGC-kinase C-terminal domain is found at 393–467 (TGIDWDHIRE…KKFNYLTMKG (75 aa)).

The protein belongs to the protein kinase superfamily. Ser/Thr protein kinase family. Interacts with mob2.

The catalysed reaction is L-seryl-[protein] + ATP = O-phospho-L-seryl-[protein] + ADP + H(+). The enzyme catalyses L-threonyl-[protein] + ATP = O-phospho-L-threonyl-[protein] + ADP + H(+). Functionally, interacts with pak1/shk1 and coordinates cell morphogenesis with the cell cycle. It is essential for maintenance of cell polarity and is involved in mitotic control. This chain is Serine/threonine-protein kinase orb6 (orb6), found in Schizosaccharomyces pombe (strain 972 / ATCC 24843) (Fission yeast).